We begin with the raw amino-acid sequence, 309 residues long: Homoserine kinase (309 aa).

91–101 (PLARGLGSSAA) contributes to the ATP binding site.

The protein belongs to the GHMP kinase family. Homoserine kinase subfamily.

Its subcellular location is the cytoplasm. It carries out the reaction L-homoserine + ATP = O-phospho-L-homoserine + ADP + H(+). It participates in amino-acid biosynthesis; L-threonine biosynthesis; L-threonine from L-aspartate: step 4/5. Its function is as follows. Catalyzes the ATP-dependent phosphorylation of L-homoserine to L-homoserine phosphate. The protein is Homoserine kinase of Bacillus velezensis (strain DSM 23117 / BGSC 10A6 / LMG 26770 / FZB42) (Bacillus amyloliquefaciens subsp. plantarum).